A 404-amino-acid chain; its full sequence is Tryptophan synthase beta chain (404 aa).

At Lys-94 the chain carries N6-(pyridoxal phosphate)lysine.

Belongs to the TrpB family. As to quaternary structure, tetramer of two alpha and two beta chains. Pyridoxal 5'-phosphate serves as cofactor.

It carries out the reaction (1S,2R)-1-C-(indol-3-yl)glycerol 3-phosphate + L-serine = D-glyceraldehyde 3-phosphate + L-tryptophan + H2O. Its pathway is amino-acid biosynthesis; L-tryptophan biosynthesis; L-tryptophan from chorismate: step 5/5. In terms of biological role, the beta subunit is responsible for the synthesis of L-tryptophan from indole and L-serine. The protein is Tryptophan synthase beta chain of Staphylococcus saprophyticus subsp. saprophyticus (strain ATCC 15305 / DSM 20229 / NCIMB 8711 / NCTC 7292 / S-41).